The chain runs to 311 residues: Thioredoxin reductase (311 aa).

Residue 35-42 coordinates FAD; the sequence is ERGIPGGQ. C134 and C137 are joined by a disulfide. 277-286 serves as a coordination point for FAD; it reads DVRDKGLRQI.

Belongs to the class-II pyridine nucleotide-disulfide oxidoreductase family. Homodimer. FAD is required as a cofactor.

The protein resides in the cytoplasm. The enzyme catalyses [thioredoxin]-dithiol + NADP(+) = [thioredoxin]-disulfide + NADPH + H(+). The polypeptide is Thioredoxin reductase (trxB) (Staphylococcus aureus (strain COL)).